The chain runs to 692 residues: Protein hook (692 aa).

Residues Ser-6–Ala-123 enclose the Calponin-homology (CH) domain. Residues Glu-135 to Thr-576 adopt a coiled-coil conformation. A disordered region spans residues Ala-161–Val-180.

This sequence belongs to the hook family. In terms of assembly, homodimer. Interacts with microtubules via its N-terminus.

Its subcellular location is the cytoplasm. The protein localises to the cytoskeleton. The protein resides in the endosome. It localises to the synapse. Involved in endocytic trafficking by stabilizing organelles of the endocytic pathway. Probably acts as a cytoskeletal linker protein required to tether endosome vesicles to the cytoskeleton. Involved in modulation of endocytosis at stages required for down-regulation of membrane proteins that control synapse size. Not involved in synaptic vesicle recycling. Required in R7 cells for boss endocytosis into multivesicular bodies (MVBs). Has a role in regulating adult longevity. The protein is Protein hook of Drosophila willistoni (Fruit fly).